The sequence spans 212 residues: MTVRFMDVFTEWASTYDDTVTGHDPEYKEVFRRYEEILDTVATKAISPVVEFGAGTGNLTQRLLDRHQDVLAVEPSPEMREILIDKIPTLPVQDGHFLSFTADHAKSFVSTYAFHHLTDEEKGEAVDLMAQILPQDGKIVYADTMFVSEEARLQTIAEAKAQGFNGLAEDLEREFYPLIPVMEQIFASRGFDVTFTQYNHFVWLVEAEKMGE.

Residues glycine 53 and glutamate 74 each coordinate S-adenosyl-L-methionine.

Belongs to the methyltransferase superfamily. YrrT family.

Its function is as follows. Could be a S-adenosyl-L-methionine-dependent methyltransferase. This is an uncharacterized protein from Exiguobacterium sibiricum (strain DSM 17290 / CCUG 55495 / CIP 109462 / JCM 13490 / 255-15).